Here is a 284-residue protein sequence, read N- to C-terminus: Probable palmitoyltransferase ZDHHC24 (284 aa).

Over 1–18 (MGESWAARGAEGAPARMP) the chain is Cytoplasmic. A helical transmembrane segment spans residues 19–39 (LVLTALWAAVVVLELAYVMVL). The Extracellular portion of the chain corresponds to 40-52 (GPGPPPLGPLARA). The helical transmembrane segment at 53 to 73 (LQLALAAYQLLNLLGNVVLFL) threads the bilayer. The Cytoplasmic portion of the chain corresponds to 74 to 137 (RSDPSIRGVM…GCCVGFHNYR (64 aa)). Residues 94–144 (AYCYQCQSQVPPRSGHCSACRVCILRRDHHCRLLGCCVGFHNYRPFLCLLL) form the DHHC domain. C124 (S-palmitoyl cysteine intermediate) is an active-site residue. Residues 138 to 158 (PFLCLLLHSAGVLLHISVLLG) traverse the membrane as a helical segment. Over 159-166 (PALSALLQ) the chain is Extracellular. The helical transmembrane segment at 167 to 187 (AHSALYTVALLLLPWLMLLTG) threads the bilayer. The Cytoplasmic segment spans residues 188–195 (KVSLAQFA). The chain crosses the membrane as a helical span at residues 196 to 216 (LAFVVDTCVAGALLCGAGLLF). Topologically, residues 217 to 284 (HGMLLLRGQT…TPGDVGLVTS (68 aa)) are extracellular.

Belongs to the DHHC palmitoyltransferase family.

The protein resides in the membrane. The enzyme catalyses L-cysteinyl-[protein] + hexadecanoyl-CoA = S-hexadecanoyl-L-cysteinyl-[protein] + CoA. In terms of biological role, probable palmitoyltransferase that could catalyze the addition of palmitate onto various protein substrates. This chain is Probable palmitoyltransferase ZDHHC24, found in Mus musculus (Mouse).